The primary structure comprises 845 residues: Protein P (845 aa).

A terminal protein domain (TP) region spans residues 1-179 (MPLSYQHFRK…FCGSPYSWEQ (179 aa)). Residues 180-348 (ELHHGRSVTK…YCLSHLVNLL (169 aa)) form a spacer region. Disordered stretches follow at residues 186-205 (SVTK…QPSG), 222-245 (QPRL…SGSI), and 288-318 (YSHL…RSQS). A compositionally biased stretch (polar residues) spans 289–301 (SHLSTSKRQSSSG). Positions 349–692 (EDWGPCADHG…YMNLYPVARQ (344 aa)) are polymerase/reverse transcriptase domain (RT). The Reverse transcriptase domain occupies 359-602 (EHHIRIPRTP…YSLNFMGYII (244 aa)). Positions 431, 553, and 554 each coordinate Mg(2+).

It belongs to the hepadnaviridae P protein family.

The catalysed reaction is DNA(n) + a 2'-deoxyribonucleoside 5'-triphosphate = DNA(n+1) + diphosphate. It catalyses the reaction Endonucleolytic cleavage to 5'-phosphomonoester.. Activated by host HSP70 and HSP40 in vitro to be able to bind the epsilon loop of the pgRNA. Because deletion of the RNase H region renders the protein partly chaperone-independent, the chaperones may be needed indirectly to relieve occlusion of the RNA-binding site by this domain. Inhibited by several reverse-transcriptase inhibitors: Lamivudine, Adefovir and Entecavir. Its function is as follows. Multifunctional enzyme that converts the viral RNA genome into dsDNA in viral cytoplasmic capsids. This enzyme displays a DNA polymerase activity that can copy either DNA or RNA templates, and a ribonuclease H (RNase H) activity that cleaves the RNA strand of RNA-DNA heteroduplexes in a partially processive 3'- to 5'-endonucleasic mode. Neo-synthesized pregenomic RNA (pgRNA) are encapsidated together with the P protein, and reverse-transcribed inside the nucleocapsid. Initiation of reverse-transcription occurs first by binding the epsilon loop on the pgRNA genome, and is initiated by protein priming, thereby the 5'-end of (-)DNA is covalently linked to P protein. Partial (+)DNA is synthesized from the (-)DNA template and generates the relaxed circular DNA (RC-DNA) genome. After budding and infection, the RC-DNA migrates in the nucleus, and is converted into a plasmid-like covalently closed circular DNA (cccDNA). The activity of P protein does not seem to be necessary for cccDNA generation, and is presumably released from (+)DNA by host nuclear DNA repair machinery. The polypeptide is Protein P (Hepatitis B virus genotype A3 (isolate Cameroon/CMR711/1994) (HBV-A)).